Here is a 209-residue protein sequence, read N- to C-terminus: CMRF35-like molecule 7 (209 aa).

An N-terminal signal peptide occupies residues 1–17; the sequence is MWLSPALLLLSFPGCLS. Residues 18-120 enclose the Ig-like V-type domain; sequence IQGPALVRGP…TDRGTRVKVN (103 aa). The Extracellular portion of the chain corresponds to 18–157; the sequence is IQGPALVRGP…SSDLQKRTYY (140 aa). Residues Cys-36 and Cys-104 are joined by a disulfide bond. N-linked (GlcNAc...) asparagine glycosylation occurs at Asn-97. Residues 158-178 traverse the membrane as a helical segment; the sequence is MLLVFVKVPALLILVGAVLWL. Topologically, residues 179–209 are cytoplasmic; sequence KRSTQKVPEEQWRHTLCSDLDSELLAKDISP. Ser-196 carries the post-translational modification Phosphoserine.

This sequence belongs to the CD300 family. Interacts with TYROBP, which enhances cell surface expression and activation properties. May interact with HCST. N-glycosylated. In terms of tissue distribution, expressed in myeloid cells (at protein level).

Its subcellular location is the cell membrane. Functionally, acts as an activating immune receptor in mast cells through its interaction with ITAM-bearing adapter TYROBP. The protein is CMRF35-like molecule 7 (Cd300lb) of Mus musculus (Mouse).